A 271-amino-acid polypeptide reads, in one-letter code: GTP cyclohydrolase FolE2 (271 aa).

It belongs to the GTP cyclohydrolase IV family.

It catalyses the reaction GTP + H2O = 7,8-dihydroneopterin 3'-triphosphate + formate + H(+). Its pathway is cofactor biosynthesis; 7,8-dihydroneopterin triphosphate biosynthesis; 7,8-dihydroneopterin triphosphate from GTP: step 1/1. In terms of biological role, converts GTP to 7,8-dihydroneopterin triphosphate. In Geotalea uraniireducens (strain Rf4) (Geobacter uraniireducens), this protein is GTP cyclohydrolase FolE2.